The primary structure comprises 1224 residues: Probable serine/threonine-protein kinase DDB_G0292350 (1224 aa).

2 disordered regions span residues M57–R98 and S252–N284. 2 stretches are compositionally biased toward low complexity: residues S58–S74 and S83–S95. Coiled-coil stretches lie at residues L352–N381 and D540–T569. 2 disordered regions span residues Q693–T784 and F815–I836. Positions N743–G768 are enriched in low complexity. Residues G772–T784 show a composition bias toward polar residues. The region spanning F935–L1193 is the Protein kinase domain. ATP contacts are provided by residues L941 to V949 and K964. Residue D1063 is the Proton acceptor of the active site.

This sequence belongs to the protein kinase superfamily. Ser/Thr protein kinase family. Requires Mg(2+) as cofactor.

The enzyme catalyses L-seryl-[protein] + ATP = O-phospho-L-seryl-[protein] + ADP + H(+). The catalysed reaction is L-threonyl-[protein] + ATP = O-phospho-L-threonyl-[protein] + ADP + H(+). The polypeptide is Probable serine/threonine-protein kinase DDB_G0292350 (Dictyostelium discoideum (Social amoeba)).